Here is a 446-residue protein sequence, read N- to C-terminus: MAASPISLDPSHVGIIKVANIPSDSLTECNKLLMKNHEEYHMFFRDTAGHNHIVHSLLTILSLGASPKQLQDRYDDGIPIQRPIPKIDHELLEKLSDPEILLKTIGEITQYHTLLEFFKREIAAKGWKEAIQEYVLARTKIADTILARMYEGAYHPIIHLGLGIEFQQPIIVAEALAQAASHDNSNIGTLFHNAEAEAGISYPSRIPKPMIELINEVRANETIRTAPRWTDFGNKMRDGVVGRAGEAMASLAAQFRIRNDEEELKRSTAEMISTCAFFAGASQHEGRKKKIDFFYMHNVTSSLFFTVFIRQDWIKLEDRVRLVEWKARLDLAWYAVSGSAALDAKWISDYSNPASDGMGWEDLFTAVNEEHDDGHAAKFIRALKNGEQECSKYEQGEWADYFPMKGDMWLKLARMCQDTTTNRPPDLKWVPFTGFDQPWKRPDLAN.

Belongs to the AflY oxidoreductase family.

Its pathway is secondary metabolite biosynthesis. Its function is as follows. Baeyer-Villiger monooxygenase; part of the gene cluster that mediates the biosynthesis of the dimeric xanthones cryptosporioptides. The pathway begins with the synthesis of atrochrysone thioester by the polyketide synthase dmx-nrPKS. The atrochrysone carboxyl ACP thioesterase dmxR1 then breaks the thioester bond and releases the atrochrysone carboxylic acid from dmx-nrPKS. Atrochrysone carboxylic acid is decarboxylated by the decarboxylase dmxR15, and oxidized by the anthrone oxygenase dmxR16 to yield emodin. Emodin is then reduced to emodin hydroquinone by the oxidoreductase dmxR7. A-ring reduction by the short chain dehydrogenase dmxR18, dehydration by the scytalone dehydratase-like protein dmxR17 and probable spontaneous re-oxidation, results in overall deoxygenation to chrysophanol. Baeyer-Villiger oxidation by the Baeyer-Villiger monooxygenase (BVMO) dmxR6 then yields monodictylactone in equilibrium with monodictyphenone. In the case of the cryptosporioptides biosynthesis, monodictylactone is reduced at C-12 to an alcohol (by the short chain dehydrogenases dmxR12 or dmxR8) and hydroxylated at C-5 by dmxR9, yielding the electron-rich aromatic which could eliminate H(2)O to form the ortho-quinonemethide, followed by tautomerisation to paraquinone and complete the formal reduction to produce the 10-methylgroup. Conjugate addition of C-4a-OH to the resulting paraquinone by the monooxygenase dmxR10 then gives cyclohexadienone, which is then reduced at C-5 by the short chain dehydrogenase dmxR3 to give the dihydroxanthone. The 6,7-epoxide in the cryptosporioptides could be introduced by the cytochrome P450 monooxygenase dmxL3. The highly reducing PKS dmxL2 manufactures butyrate, which is further carboxylated by dmxL1 to form ethylmalonate. It is not yet clear whether the carboxylation occurs while the butyrate is attached to the ACP of dmxL2, but this unusual fungal metabolite could then be esterified to O-5 by the O-acetyltransferase dmxR13. Finally, dimerization performed by dmxR5 gives the observed dimers cryptosporioptides A, B and C as the final products of the pathway. The protein is Baeyer-Villiger monooxygenase dmxR6 of Cryptosporiopsis sp. (strain 8999).